The primary structure comprises 635 residues: DNA mismatch repair protein MutL (635 aa).

Residues 359–399 (GTNKYAQPEAAKSSAAEQAVARERSSARERAAPAYKEDHPY) form a disordered region. A compositionally biased stretch (low complexity) spans 364–377 (AQPEAAKSSAAEQA). The segment covering 378-399 (VARERSSARERAAPAYKEDHPY) has biased composition (basic and acidic residues).

It belongs to the DNA mismatch repair MutL/HexB family.

In terms of biological role, this protein is involved in the repair of mismatches in DNA. It is required for dam-dependent methyl-directed DNA mismatch repair. May act as a 'molecular matchmaker', a protein that promotes the formation of a stable complex between two or more DNA-binding proteins in an ATP-dependent manner without itself being part of a final effector complex. This chain is DNA mismatch repair protein MutL, found in Yersinia pestis bv. Antiqua (strain Antiqua).